The following is a 471-amino-acid chain: MTDLPDSTRWQLWIVAFGFFMQSLDTTIVNTALPSMAQSLGESPLHMHMVIVSYVLTVAVMLPASGWLADKVGVRNIFFTAIVLFTLGSLFCALSGTLNELLLARALQGVGGAMMVPVGRLTVMKIVPREQYMAAMTFVTLPGQVGPLLGPALGGLLVEYASWHWIFLINIPVGIIGAIATLMLMPNYTMQTRRFDLSGFLLLAVGMAVLTLALDGSKGTGLSPLAIAGLVAVGVVALVLYLLHARNNNRALFSLKLFRTRTFSLGLAGSFAGRIGSGMLPFMTPVFLQIGLGFSPFHAGLMMIPMVLGSMGMKRIVVQVVNRFGYRRVLVATTLGLSLVTLLFMTTALLGWYYVLPFVLFLQGMVNSTRFSSMNTLTLKDLPDNLASSGNSLLSMIMQLSMSIGVTIAGLLLGLFGSQHISVDSGTTQTVFMYTWLSMAFIIALPAFIFARVPNDTHQNVAISRRKRSAQ.

Over 1 to 11 (MTDLPDSTRWQ) the chain is Periplasmic. Residues 12 to 32 (LWIVAFGFFMQSLDTTIVNTA) form a helical membrane-spanning segment. The Cytoplasmic segment spans residues 33–48 (LPSMAQSLGESPLHMH). The helical transmembrane segment at 49 to 69 (MVIVSYVLTVAVMLPASGWLA) threads the bilayer. Residues 70-76 (DKVGVRN) lie on the Periplasmic side of the membrane. Residues 77-97 (IFFTAIVLFTLGSLFCALSGT) traverse the membrane as a helical segment. At 98–101 (LNEL) the chain is on the cytoplasmic side. Residues 102–124 (LLARALQGVGGAMMVPVGRLTVM) form a helical membrane-spanning segment. The Periplasmic segment spans residues 125 to 137 (KIVPREQYMAAMT). Residues 138–158 (FVTLPGQVGPLLGPALGGLLV) form a helical membrane-spanning segment. Residues 159–164 (EYASWH) are Cytoplasmic-facing. A helical transmembrane segment spans residues 165–185 (WIFLINIPVGIIGAIATLMLM). Topologically, residues 186-196 (PNYTMQTRRFD) are periplasmic. The chain crosses the membrane as a helical span at residues 197-217 (LSGFLLLAVGMAVLTLALDGS). The Cytoplasmic portion of the chain corresponds to 218 to 224 (KGTGLSP). Residues 225–245 (LAIAGLVAVGVVALVLYLLHA) traverse the membrane as a helical segment. The Periplasmic portion of the chain corresponds to 246 to 262 (RNNNRALFSLKLFRTRT). A helical transmembrane segment spans residues 263–283 (FSLGLAGSFAGRIGSGMLPFM). Residues 284–285 (TP) are Cytoplasmic-facing. Residues 286–306 (VFLQIGLGFSPFHAGLMMIPM) traverse the membrane as a helical segment. Topologically, residues 307–341 (VLGSMGMKRIVVQVVNRFGYRRVLVATTLGLSLVT) are periplasmic. The helical transmembrane segment at 342-362 (LLFMTTALLGWYYVLPFVLFL) threads the bilayer. At 363 to 395 (QGMVNSTRFSSMNTLTLKDLPDNLASSGNSLLS) the chain is on the cytoplasmic side. Residues 396–416 (MIMQLSMSIGVTIAGLLLGLF) form a helical membrane-spanning segment. Residues 417–430 (GSQHISVDSGTTQT) are Periplasmic-facing. Residues 431 to 451 (VFMYTWLSMAFIIALPAFIFA) form a helical membrane-spanning segment. The Cytoplasmic segment spans residues 452–471 (RVPNDTHQNVAISRRKRSAQ).

Belongs to the major facilitator superfamily. TCR/Tet family.

It is found in the cell inner membrane. The sequence is that of Putative multidrug resistance protein MdtD from Shigella flexneri.